We begin with the raw amino-acid sequence, 336 residues long: UPF0324 membrane protein BR0028/BS1330_I0028 (336 aa).

11 helical membrane-spanning segments follow: residues 9–26 (ILPG…AMVL), 36–55 (RAWL…VRSL), 68–90 (FSAK…ASAV), 94–116 (GSGL…YGIG), 128–150 (LVAC…VIGA), 160–182 (AFTA…LLGL), 189–211 (ILAG…VSLL), 221–240 (LVRV…ISGN), 247–269 (PGFF…LHSL), 279–301 (AIQY…GVDI), and 313–335 (LTAI…MLGV).

Belongs to the UPF0324 family.

The protein resides in the cell membrane. This is UPF0324 membrane protein BR0028/BS1330_I0028 from Brucella suis biovar 1 (strain 1330).